A 109-amino-acid chain; its full sequence is Guanylin (109 aa).

The signal sequence occupies residues 1 to 21 (MNTFLFPTLCLLGVWAALAGG). Residues 22–94 (VTVKDGEFSF…LERLETIAQD (73 aa)) constitute a propeptide that is removed on maturation. Disulfide bonds link C63-C76, C98-C106, and C101-C109.

This sequence belongs to the guanylin family.

The protein resides in the secreted. In terms of biological role, endogenous activator of intestinal guanylate cyclase. It stimulates this enzyme through the same receptor binding region as the heat-stable enterotoxins. The chain is Guanylin (GUCA2A) from Sus scrofa (Pig).